Consider the following 651-residue polypeptide: Probable potassium transport system protein Kup (651 aa).

12 helical membrane-spanning segments follow: residues 41 to 61 (LVLG…IYAF), 82 to 102 (VVSL…VLFV), 130 to 150 (LILG…VITP), 163 to 183 (IVAP…LVTL), 194 to 214 (VAIV…ASGL), 235 to 255 (FLTV…LAMT), 276 to 296 (WLWI…AFIL), 309 to 329 (MIPS…TVIA), 366 to 386 (IYIP…VLGF), 395 to 415 (AYGI…YIVM), 426 to 446 (ALPI…ANII), and 450 to 470 (EGGW…WTWV).

Belongs to the HAK/KUP transporter (TC 2.A.72) family.

It localises to the cell inner membrane. The catalysed reaction is K(+)(in) + H(+)(in) = K(+)(out) + H(+)(out). Functionally, transport of potassium into the cell. Likely operates as a K(+):H(+) symporter. This chain is Probable potassium transport system protein Kup, found in Brucella suis (strain ATCC 23445 / NCTC 10510).